The primary structure comprises 336 residues: Aspartate--ammonia ligase (336 aa).

The protein belongs to the class-II aminoacyl-tRNA synthetase family. AsnA subfamily.

The protein localises to the cytoplasm. The catalysed reaction is L-aspartate + NH4(+) + ATP = L-asparagine + AMP + diphosphate + H(+). Its pathway is amino-acid biosynthesis; L-asparagine biosynthesis; L-asparagine from L-aspartate (ammonia route): step 1/1. The polypeptide is Aspartate--ammonia ligase (Ligilactobacillus salivarius (strain UCC118) (Lactobacillus salivarius)).